The following is a 213-amino-acid chain: Orotate phosphoribosyltransferase (213 aa).

Lys-26 is a binding site for 5-phospho-alpha-D-ribose 1-diphosphate. 34–35 (FF) contributes to the orotate binding site. Residues 72 to 73 (YK), Arg-98, Lys-99, Lys-102, His-104, and 123 to 131 (DDVISAGTS) contribute to the 5-phospho-alpha-D-ribose 1-diphosphate site. Ser-127 and Arg-155 together coordinate orotate.

This sequence belongs to the purine/pyrimidine phosphoribosyltransferase family. PyrE subfamily. In terms of assembly, homodimer. The cofactor is Mg(2+).

It carries out the reaction orotidine 5'-phosphate + diphosphate = orotate + 5-phospho-alpha-D-ribose 1-diphosphate. It functions in the pathway pyrimidine metabolism; UMP biosynthesis via de novo pathway; UMP from orotate: step 1/2. Its function is as follows. Catalyzes the transfer of a ribosyl phosphate group from 5-phosphoribose 1-diphosphate to orotate, leading to the formation of orotidine monophosphate (OMP). The sequence is that of Orotate phosphoribosyltransferase from Laribacter hongkongensis (strain HLHK9).